The primary structure comprises 216 residues: Transmembrane emp24 domain-containing protein eca (216 aa).

The signal sequence occupies residues 1-20; that stretch reads MRDQFICLALLLCALHSACG. Over 21–182 the chain is Lumenal; sequence LYFHISETER…FRHTSESTNS (162 aa). One can recognise a GOLD domain in the interval 30–126; the sequence is RKCFIEEVPD…QLRVHLDIQV (97 aa). Positions 134-164 form a coiled coil; that stretch reads ANVAQKEKLTELQLRIRQLLDQVEQITKEQN. The helical transmembrane segment at 183–203 threads the bilayer; it reads RVLWWSLAQTLVLVCMGFWQM. Topologically, residues 204–216 are cytoplasmic; sequence RHLKSFFEAKKLV. The short motif at 213–216 is the Prevents secretion from ER element; that stretch reads KKLV.

Belongs to the EMP24/GP25L family.

The protein resides in the endoplasmic reticulum membrane. In terms of biological role, eca and bai are essential, though not redundant, for dorsoventral patterning of the embryo. Specifically required during early embryogenesis for the activity of maternal tkv, while the zygotic tkv is not affected. Involved in Golgi organization. This Drosophila pseudoobscura pseudoobscura (Fruit fly) protein is Transmembrane emp24 domain-containing protein eca.